We begin with the raw amino-acid sequence, 313 residues long: Cytochrome c biogenesis protein CcsA (313 aa).

Helical transmembrane passes span 9-29 (ILTHISFSIVSIVITIHLITF), 44-64 (GIIVTFFCITGLLVTRWISSG), 71-91 (LYESLIFLSWSFSLIHIIPYF), 111-131 (GFATSGILTEIHQSGILVPAL), 143-163 (MILGYAALLCGSLLSVALLVI), 217-237 (VISLGFTFLTIGILSGAVWAN), 244-264 (WNWDPKETWAFITWIVFAIYL), and 278-298 (AIVASIGFLIIWICYFGVNLL).

It belongs to the CcmF/CycK/Ccl1/NrfE/CcsA family. In terms of assembly, may interact with Ccs1.

It localises to the plastid. Its subcellular location is the chloroplast thylakoid membrane. In terms of biological role, required during biogenesis of c-type cytochromes (cytochrome c6 and cytochrome f) at the step of heme attachment. This chain is Cytochrome c biogenesis protein CcsA, found in Solanum bulbocastanum (Wild potato).